A 282-amino-acid chain; its full sequence is MAEKNASAVDGAIRVSGMQFSYDVQDPIFFDFNLDLPAGSRCLLVGANGSGKTTLLKILAGKHMVGGKNVVQVLDRSAFHDTELVCSGDLSYLGGSWSKTAGSAGDIPLQGDFSAEHMIFGVEGIDPFRREKLIDLLDINLQWRMHKVSDGQRRRVQICMGLLHPFKVLLLDEVTVDLDVVARMDLLEFFKEECEQRGATIVYATHIFDGLETWASHLAYINGGELKLSAKLDEIKDLKTSPNLLSVVEAWLRSETKVEKKTKKKPVVTSPFMSSRQMAYYR.

The 236-residue stretch at 13–248 (IRVSGMQFSY…KTSPNLLSVV (236 aa)) folds into the ABC transporter domain. 46 to 53 (GANGSGKT) contributes to the ATP binding site.

The protein belongs to the ABC transporter superfamily. ABCI family. Expressed in root elongating zone and root meristem, as well as in elongating etiolated hypocotyls.

It localises to the cytoplasm. The polypeptide is ABC transporter I family member 21 (ABCI21) (Arabidopsis thaliana (Mouse-ear cress)).